A 116-amino-acid chain; its full sequence is Somatostatin (116 aa).

An N-terminal signal peptide occupies residues 1–24 (MLSCRLQCALAALCIVLALGGVTG). Positions 35–88 (LQKSLAAATGKQELAKYFLAELLSEPNQTENDALEPEDLPQAAEQDEMRLELQR) are excised as a propeptide. Threonine amide is present on Thr43. Cys105 and Cys116 are disulfide-bonded.

Belongs to the somatostatin family. C-terminal amidation of the neuronostatin peptide is required for its biological activity, including for the regulation of mean arterial pressure. As to expression, in the pancreas, somatostatin is expressed in delta cells of the islets of Langerhans. In the stomach, it is expressed in parietal cells of oxyntic mucosa and in the small intestine, it is found in the villus (at protein level). Neuronostatin is expressed in the pancreas in delta cells of the islets of Langerhans, as well as in the stomach, in parietal cells of oxyntic mucosa and in the small intestine, in the villus (at protein level).

It is found in the secreted. Functionally, inhibits the secretion of pituitary hormones, including that of growth hormone/somatotropin (GH1), PRL, ACTH, luteinizing hormone (LH) and TSH. Also impairs ghrelin- and GnRH-stimulated secretion of GH1 and LH; the inhibition of ghrelin-stimulated secretion of GH1 can be further increased by neuronostatin. May enhance low-glucose-induced glucagon release by pancreatic alpha cells. This effect may be mediated by binding to GPR107 and PKA activation. May regulate cardiac contractile function. May compromise cardiomyocyte viability. In the central nervous system, may impair memory retention and may affect hippocampal excitability. May also have anxiolytic and anorexigenic effects. May play a role in arterial pressure regulation. May inhibit basal, but not ghrelin- or GnRH-stimulated secretion of GH1 or LH, but does not affect the release of other pituitary hormones, including PRL, ACTH, FSH or TSH. Potentiates inhibitory action of somatostatin on ghrelin-stimulated secretion of GH1, but not that on GnRH-stimulated secretion of LH. The polypeptide is Somatostatin (Sst) (Mus musculus (Mouse)).